A 238-amino-acid polypeptide reads, in one-letter code: Ribosomal RNA small subunit methyltransferase G (238 aa).

S-adenosyl-L-methionine is bound by residues Gly-77, Phe-82, 128 to 129 (AE), and Arg-147.

Belongs to the methyltransferase superfamily. RNA methyltransferase RsmG family.

Its subcellular location is the cytoplasm. Its function is as follows. Specifically methylates the N7 position of guanine in position 535 of 16S rRNA. The sequence is that of Ribosomal RNA small subunit methyltransferase G from Listeria welshimeri serovar 6b (strain ATCC 35897 / DSM 20650 / CCUG 15529 / CIP 8149 / NCTC 11857 / SLCC 5334 / V8).